Consider the following 1400-residue polypeptide: DNA-directed RNA polymerase subunit beta' (1400 aa).

Residues cysteine 70, cysteine 72, cysteine 85, and cysteine 88 each contribute to the Zn(2+) site. The Mg(2+) site is built by aspartate 460, aspartate 462, and aspartate 464. Zn(2+) is bound by residues cysteine 814, cysteine 887, cysteine 894, and cysteine 897.

It belongs to the RNA polymerase beta' chain family. As to quaternary structure, the RNAP catalytic core consists of 2 alpha, 1 beta, 1 beta' and 1 omega subunit. When a sigma factor is associated with the core the holoenzyme is formed, which can initiate transcription. Mg(2+) is required as a cofactor. Requires Zn(2+) as cofactor.

The enzyme catalyses RNA(n) + a ribonucleoside 5'-triphosphate = RNA(n+1) + diphosphate. DNA-dependent RNA polymerase catalyzes the transcription of DNA into RNA using the four ribonucleoside triphosphates as substrates. This is DNA-directed RNA polymerase subunit beta' from Marinomonas sp. (strain MWYL1).